Consider the following 108-residue polypeptide: Putative septation protein SpoVG (108 aa).

This sequence belongs to the SpoVG family.

In terms of biological role, could be involved in septation. The protein is Putative septation protein SpoVG of Bdellovibrio bacteriovorus (strain ATCC 15356 / DSM 50701 / NCIMB 9529 / HD100).